Here is a 425-residue protein sequence, read N- to C-terminus: Glutamate-1-semialdehyde 2,1-aminomutase (425 aa).

K265 carries the post-translational modification N6-(pyridoxal phosphate)lysine.

It belongs to the class-III pyridoxal-phosphate-dependent aminotransferase family. HemL subfamily. In terms of assembly, homodimer. Requires pyridoxal 5'-phosphate as cofactor.

Its subcellular location is the cytoplasm. It carries out the reaction (S)-4-amino-5-oxopentanoate = 5-aminolevulinate. It functions in the pathway porphyrin-containing compound metabolism; protoporphyrin-IX biosynthesis; 5-aminolevulinate from L-glutamyl-tRNA(Glu): step 2/2. The chain is Glutamate-1-semialdehyde 2,1-aminomutase from Opitutus terrae (strain DSM 11246 / JCM 15787 / PB90-1).